We begin with the raw amino-acid sequence, 662 residues long: Serine/threonine kinase-like domain-containing protein STKLD1 (662 aa).

Residues 1–202 (MLNPGALGVN…ILDMATCSFL (202 aa)) enclose the Protein kinase domain. Residues 2 to 10 (LNPGALGVN) and lysine 25 contribute to the ATP site. The disordered stretch occupies residues 639-662 (LQEDQLEPPAGQEAPLQGEPLFRP).

The protein belongs to the protein kinase superfamily. Ser/Thr protein kinase family. STKL subfamily.

The sequence is that of Serine/threonine kinase-like domain-containing protein STKLD1 (Stkld1) from Mus musculus (Mouse).